A 362-amino-acid polypeptide reads, in one-letter code: Caveolae-associated protein 4 (362 aa).

The interval 1–24 (MEHNGSASNAGKIHQNRLSSVTED) is disordered. The stretch at 100–120 (IKDVKARVEKQQVRVTKVETK) forms a coiled coil. Phosphoserine is present on residues Ser-152, Ser-171, and Ser-172. Basic and acidic residues-rich tracts occupy residues 230 to 255 (RERLRQSGERLRQSGERLRQSGERFK), 275 to 289 (KAKDPKAEGQEVDRG), and 305 to 320 (HEFHSDEFSETEKEVT). Disordered regions lie at residues 230–289 (RERL…VDRG) and 305–346 (HEFH…KPQV). Residue Tyr-324 is modified to Phosphotyrosine. Position 334 is a phosphothreonine (Thr-334). Residue Ser-353 is modified to Phosphoserine.

The protein belongs to the CAVIN family. In terms of assembly, component of the CAVIN complex composed of CAVIN1, CAVIN2, CAVIN3 and CAVIN4. Interacts with CAVIN1. Interacts with CAVIN2; this augments the transactivation of NPPA. Interacts with CAV3, ADRA1A, ADRA1B, MAPK1 and MAPK3. In terms of tissue distribution, abundantly expressed in cardiac and skeletal muscle (at protein level). Weaker expression in aorta and lung. In heart, expressed in cardiomyocytes and vascular smooth muscle cells but not in other surrounding cells including vascular endothelial cells.

The protein resides in the cytoplasm. It localises to the myofibril. It is found in the sarcomere. Its subcellular location is the cytosol. The protein localises to the membrane. The protein resides in the caveola. It localises to the cell membrane. It is found in the sarcolemma. Its function is as follows. Modulates the morphology of formed caveolae in cardiomyocytes, but is not required for caveolar formation. Facilitates the recruitment of MAPK1/3 to caveolae within cardiomyocytes and regulates alpha-1 adrenergic receptor-induced hypertrophic responses in cardiomyocytes through MAPK1/3 activation. Contributes to proper membrane localization and stabilization of caveolin-3 (CAV3) in cardiomyocytes. Induces RHOA activation and activates NPPA transcription and myofibrillar organization through the Rho/ROCK signaling pathway. The protein is Caveolae-associated protein 4 (Cavin4) of Mus musculus (Mouse).